The primary structure comprises 137 residues: 2-iminobutanoate/2-iminopropanoate deaminase (137 aa).

Residue S2 is modified to N-acetylserine. 2 positions are modified to N6-succinyllysine: K13 and K67. Phosphothreonine is present on T74. S136 carries the phosphoserine modification.

The protein belongs to the RutC family. Homotrimer. Interacts with YTHDF2.

The protein localises to the cytoplasm. It is found in the nucleus. The protein resides in the peroxisome. Its subcellular location is the mitochondrion. The enzyme catalyses 2-iminobutanoate + H2O = 2-oxobutanoate + NH4(+). The catalysed reaction is 2-iminopropanoate + H2O = pyruvate + NH4(+). Functionally, catalyzes the hydrolytic deamination of enamine/imine intermediates that form during the course of normal metabolism. May facilitate the release of ammonia from these potentially toxic reactive metabolites, reducing their impact on cellular components. It may act on enamine/imine intermediates formed by several types of pyridoxal-5'-phosphate-dependent dehydratases including L-threonine dehydratase. In terms of biological role, also promotes endoribonucleolytic cleavage of some transcripts by promoting recruitment of the ribonuclease P/MRP complex. Acts by bridging YTHDF2 and the ribonuclease P/MRP complex. RIDA/HRSP12 binds to N6-methyladenosine (m6A)-containing mRNAs containing a 5'-GGUUC-3' motif: cooperative binding of RIDA/HRSP12 and YTHDF2 to such transcripts lead to recruitment of the ribonuclease P/MRP complex and subsequent endoribonucleolytic cleavage. This Bos taurus (Bovine) protein is 2-iminobutanoate/2-iminopropanoate deaminase.